The sequence spans 377 residues: Protein RecA (377 aa).

The segment covering 1–13 has biased composition (polar residues); it reads MSNEGKPLQSTES. The interval 1–20 is disordered; the sequence is MSNEGKPLQSTESTKIDAKS. 82–89 lines the ATP pocket; that stretch reads GPESSGKT. Residues 346–377 are disordered; it reads GSEVSANSMRPLASAARQASSRPKLSQVSANG. Residues 362–377 are compositionally biased toward polar residues; sequence RQASSRPKLSQVSANG.

The protein belongs to the RecA family.

It localises to the cytoplasm. Its function is as follows. Can catalyze the hydrolysis of ATP in the presence of single-stranded DNA, the ATP-dependent uptake of single-stranded DNA by duplex DNA, and the ATP-dependent hybridization of homologous single-stranded DNAs. It interacts with LexA causing its activation and leading to its autocatalytic cleavage. This Prochlorococcus marinus (strain NATL1A) protein is Protein RecA.